The chain runs to 466 residues: MAKTLYDKVWQAHIIDQIGEDSLIYIDRHLIHEVTSPQAFAGLNEKGRKVRRPDRTVGTMDHSISTRSLAIDACGPANALQLQTLAKNCEEHNIQLFPVGHQKQGIVHVMGPELGLIQPGMTVVCGDSHTATHGAFGALAFGIGTSQVEHVLATQTLKQSRAKSMLINVNGKLPVGITAKDIILAIIGKIGHAGATGHVIEYAGEAIRGLSMEERMTVCNMSIEAGAKAGLVAPDEKTFAYLEGREYAPKGQDWEDAVAYWKTLYTEEGAKFDTVVELEAADIAPQVTWGTNPGQVIGVNTPVPAPEDFSDPIEKESAVKALEYMGLKPGEKLADIPVNHVFIGSCTNGRIEDMRAAAQVAKRGKVADSVTAIVVPGSGAVKRQAEAEGLDKIFTDAGFEWRLPGCSMCLGMNDDKLVAGDRCASTSNRNFEGRQGRGARTHLVSPAMAAAAAITGRFADVRDYQE.

[4Fe-4S] cluster-binding residues include Cys346, Cys406, and Cys409.

This sequence belongs to the aconitase/IPM isomerase family. LeuC type 1 subfamily. In terms of assembly, heterodimer of LeuC and LeuD. Requires [4Fe-4S] cluster as cofactor.

The enzyme catalyses (2R,3S)-3-isopropylmalate = (2S)-2-isopropylmalate. It functions in the pathway amino-acid biosynthesis; L-leucine biosynthesis; L-leucine from 3-methyl-2-oxobutanoate: step 2/4. In terms of biological role, catalyzes the isomerization between 2-isopropylmalate and 3-isopropylmalate, via the formation of 2-isopropylmaleate. The chain is 3-isopropylmalate dehydratase large subunit from Alteromonas mediterranea (strain DSM 17117 / CIP 110805 / LMG 28347 / Deep ecotype).